A 404-amino-acid polypeptide reads, in one-letter code: Pyrophosphate--fructose 6-phosphate 1-phosphotransferase (404 aa).

Glycine 12 lines the diphosphate pocket. Aspartate 121 contacts Mg(2+). Substrate is bound by residues 149-151 (TID), 194-196 (MGR), glutamate 266, and 323-326 (YFSR). The active-site Proton acceptor is aspartate 151.

It belongs to the phosphofructokinase type A (PFKA) family. PPi-dependent PFK group II subfamily. Clade 'P' sub-subfamily. Homodimer. Mg(2+) serves as cofactor.

The protein localises to the cytoplasm. It carries out the reaction beta-D-fructose 6-phosphate + diphosphate = beta-D-fructose 1,6-bisphosphate + phosphate + H(+). It functions in the pathway carbohydrate degradation; glycolysis; D-glyceraldehyde 3-phosphate and glycerone phosphate from D-glucose: step 3/4. Its activity is regulated as follows. Non-allosteric. In terms of biological role, catalyzes the phosphorylation of D-fructose 6-phosphate, the first committing step of glycolysis. Uses inorganic phosphate (PPi) as phosphoryl donor instead of ATP like common ATP-dependent phosphofructokinases (ATP-PFKs), which renders the reaction reversible, and can thus function both in glycolysis and gluconeogenesis. Consistently, PPi-PFK can replace the enzymes of both the forward (ATP-PFK) and reverse (fructose-bisphosphatase (FBPase)) reactions. The sequence is that of Pyrophosphate--fructose 6-phosphate 1-phosphotransferase from Propionibacterium freudenreichii subsp. shermanii (strain ATCC 9614 / DSM 4902 / CIP 103027 / NCIMB 8099 / CIRM-BIA1).